Consider the following 391-residue polypeptide: NADH-quinone oxidoreductase subunit D (391 aa).

It belongs to the complex I 49 kDa subunit family. As to quaternary structure, NDH-1 is composed of 14 different subunits. Subunits NuoB, C, D, E, F, and G constitute the peripheral sector of the complex.

Its subcellular location is the cell inner membrane. The catalysed reaction is a quinone + NADH + 5 H(+)(in) = a quinol + NAD(+) + 4 H(+)(out). In terms of biological role, NDH-1 shuttles electrons from NADH, via FMN and iron-sulfur (Fe-S) centers, to quinones in the respiratory chain. The immediate electron acceptor for the enzyme in this species is believed to be ubiquinone. Couples the redox reaction to proton translocation (for every two electrons transferred, four hydrogen ions are translocated across the cytoplasmic membrane), and thus conserves the redox energy in a proton gradient. This Rickettsia rickettsii (strain Sheila Smith) protein is NADH-quinone oxidoreductase subunit D.